Reading from the N-terminus, the 436-residue chain is Succinyl-CoA:glutarate CoA-transferase (436 aa).

A mitochondrion-targeting transit peptide spans 1 to 8 (MLWMLARA). Aspartate 203 (nucleophile) is an active-site residue. N6-acetyllysine occurs at positions 392 and 423.

This sequence belongs to the CoA-transferase III family.

Its subcellular location is the mitochondrion. It carries out the reaction glutarate + succinyl-CoA = glutaryl-CoA + succinate. It catalyses the reaction 3-hydroxy-3-methylglutarate + succinyl-CoA = (3S)-3-hydroxy-3-methylglutaryl-CoA + succinate. The catalysed reaction is 3-hydroxy-3-methylglutarate + glutaryl-CoA = (3S)-3-hydroxy-3-methylglutaryl-CoA + glutarate. The enzyme catalyses hexanedioate + glutaryl-CoA = hexanedioyl-CoA + glutarate. It carries out the reaction itaconate + glutaryl-CoA = itaconyl-CoA + glutarate. It catalyses the reaction itaconate + succinyl-CoA = itaconyl-CoA + succinate. Its function is as follows. Coenzyme A (CoA) transferase that reversibly catalyzes the transfer of a CoA moiety from a dicarboxyl-CoA to a dicarboxylate in a metabolite recycling process. Displays preference for succinyl-CoA and glutarate-CoA as dicarboxyl-CoA donors and glutarate, succinate, adipate/hexanedioate, itaconate and 3-hydroxy-3-methylglutarate as dicarboxylate acceptors. Acts on intermediates or end products of lysine and tryptophan degradation pathway, in particular catalyzes succinyl-CoA-dependent reesterification of free glutarate into glutaryl-CoA to prevent renal excretion of glutarate. Upon inflammation, may convert macrophage-derived itaconate to itaconyl-CoA in erythroid precursors where it negatively regulates the TCA cycle and heme synthesis to limit erythroid differentiation in the context of stress erythropoiesis. This chain is Succinyl-CoA:glutarate CoA-transferase, found in Mus musculus (Mouse).